The sequence spans 568 residues: Glucose-6-phosphate isomerase, cytosolic 1 (568 aa).

Catalysis depends on Glu360, which acts as the Proton donor. Active-site residues include His391 and Lys516.

The protein belongs to the GPI family. As to quaternary structure, homodimer.

It is found in the cytoplasm. The catalysed reaction is alpha-D-glucose 6-phosphate = beta-D-fructose 6-phosphate. It functions in the pathway carbohydrate degradation; glycolysis; D-glyceraldehyde 3-phosphate and glycerone phosphate from D-glucose: step 2/4. This chain is Glucose-6-phosphate isomerase, cytosolic 1 (PGIC1), found in Clarkia arcuata (Glandular clarkia).